The primary structure comprises 526 residues: Bifunctional purine biosynthesis protein PurH (526 aa).

An MGS-like domain is found at 1-145; that stretch reads MIRTALLSVS…KNHQDVTVLI (145 aa).

This sequence belongs to the PurH family.

It catalyses the reaction (6R)-10-formyltetrahydrofolate + 5-amino-1-(5-phospho-beta-D-ribosyl)imidazole-4-carboxamide = 5-formamido-1-(5-phospho-D-ribosyl)imidazole-4-carboxamide + (6S)-5,6,7,8-tetrahydrofolate. The enzyme catalyses IMP + H2O = 5-formamido-1-(5-phospho-D-ribosyl)imidazole-4-carboxamide. Its pathway is purine metabolism; IMP biosynthesis via de novo pathway; 5-formamido-1-(5-phospho-D-ribosyl)imidazole-4-carboxamide from 5-amino-1-(5-phospho-D-ribosyl)imidazole-4-carboxamide (10-formyl THF route): step 1/1. The protein operates within purine metabolism; IMP biosynthesis via de novo pathway; IMP from 5-formamido-1-(5-phospho-D-ribosyl)imidazole-4-carboxamide: step 1/1. In Polynucleobacter asymbioticus (strain DSM 18221 / CIP 109841 / QLW-P1DMWA-1) (Polynucleobacter necessarius subsp. asymbioticus), this protein is Bifunctional purine biosynthesis protein PurH.